Consider the following 796-residue polypeptide: Leucine--tRNA ligase (796 aa).

The 'HIGH' region motif lies at 40-51 (PYPSASGLHVGH). Residues 569–573 (KMSKS) carry the 'KMSKS' region motif. Lys-572 is a binding site for ATP.

The protein belongs to the class-I aminoacyl-tRNA synthetase family.

The protein localises to the cytoplasm. It carries out the reaction tRNA(Leu) + L-leucine + ATP = L-leucyl-tRNA(Leu) + AMP + diphosphate. This Bdellovibrio bacteriovorus (strain ATCC 15356 / DSM 50701 / NCIMB 9529 / HD100) protein is Leucine--tRNA ligase.